The following is a 2879-amino-acid chain: Peramine synthetase ppzA (2879 aa).

Basic and acidic residues predominate over residues 1–12 (MTYDEGGHRNNE). Residues 1 to 52 (MTYDEGGHRNNEETPQDVNMSSNNEGMSTSSPTGSYGEIIGQATVSVPQEDQ) are disordered. Polar residues predominate over residues 16 to 34 (QDVNMSSNNEGMSTSSPTG). Residues 351–747 (QEQCRLQPNT…VGRKDTQVKI (397 aa)) form an adenylation 1 region. A Carrier 1 domain is found at 882–958 (QPLSDMERLL…DLSRQSKYIE (77 aa)). Position 919 is an O-(pantetheine 4'-phosphoryl)serine (Ser-919). Residues 997 to 1410 (DAYPCTPLQE…ITILTTEDLE (414 aa)) form a condensation region. An adenylation 2 region spans residues 1433-1827 (DKVQHRPNAP…LSFVRRKDTT (395 aa)). Residues 1958-2050 (LEIGCGSGMM…KYLVKLIQDI (93 aa)) are methylation (Met) domain. Residues 2370–2448 (WPTTDTGKEL…RLLLDCCCDD (79 aa)) enclose the Carrier 2 domain. Ser-2407 is subject to O-(pantetheine 4'-phosphoryl)serine. The segment at 2500–2817 (TVLLTGANGF…LEDMLQDLDD (318 aa)) is thiesterase (TE) domain.

This sequence belongs to the NRP synthetase family. The cofactor is pantetheine 4'-phosphate.

The enzyme catalyses (S)-1-pyrroline-5-carboxylate + L-arginine + S-adenosyl-L-methionine + 2 ATP = peramine + 2 AMP + S-adenosyl-L-homocysteine + 2 diphosphate + H2O + 2 H(+). It functions in the pathway secondary metabolite biosynthesis. Its function is as follows. Nonribosomal peptide synthetase; part of the gene cluster that mediates the biosynthesis of pyrrolopyrazines, secondary metabolites showing insecticidal activity. The single multifunctional NRPS ppzA is responsible for the biosynthesis of peramine. The condensation domain of ppzA is proposed to catalyze formation of a peptide bond between 1-pyrroline-5-carboxylate and arginine. The methylation domain of ppzA would catalyze the N-methylation of the alpha-amino group of arginine. The reductase domain is proposed to be responsible for reduction of the thioester and the cyclization to form an iminium ion resulting in release from the peptide synthetase. Deprotonation of this intermediate and oxidation of the pyrroline ring would give rise to peramine. This final oxidation to give the pyrrole functionality may be spontaneous. In Epichloe species that produce only peramine, the peramine synthetase gene is not localized in a gene cluster, in contrast to Metarhizium species that contain additional pyrrolopyrazine biosynthesis genes. The 2-oxoglutarate-Fe(II) type oxidoreductase ppzC hydroxylates peramine to yield the newly identified compound 8-hydroxyperamine whereas ppzD converts L-proline into trans-4-hydroxy-L-proline, a precursor of peramine biosynthesis. This is Peramine synthetase ppzA from Metarhizium rileyi (strain RCEF 4871) (Nomuraea rileyi).